Reading from the N-terminus, the 642-residue chain is Kinesin-like protein KIF12 (642 aa).

Basic and acidic residues predominate over residues 1–13 (MEERGSPDGDPAR). The segment at 1–25 (MEERGSPDGDPARNLEQGPEGSETP) is disordered. Ser6 carries the phosphoserine modification. The region spanning 25–360 (PIQVVLRVRP…LRYASRAQRI (336 aa)) is the Kinesin motor domain. An ATP-binding site is contributed by 104–111 (GQTGSGKT). Ser369 is modified (phosphoserine). Residues 376 to 465 (QQVENELLRL…QVHDLERRLL (90 aa)) adopt a coiled-coil conformation. 2 disordered regions span residues 531–561 (GHIS…SQSD) and 579–642 (PSAP…LSSC). The segment covering 538 to 548 (WPPPWAPPPSP) has biased composition (pro residues). Polar residues predominate over residues 610–642 (TLTQQINSSLHLSQRQPQPSEDTQSPGQGLSSC). A Phosphoserine modification is found at Ser634.

The protein belongs to the TRAFAC class myosin-kinesin ATPase superfamily. Kinesin family. Expressed in the liver.

The protein localises to the cytoplasm. Its subcellular location is the cytoskeleton. The protein is Kinesin-like protein KIF12 (Kif12) of Mus musculus (Mouse).